Reading from the N-terminus, the 351-residue chain is MKIAVALSGGTDSLFALLLLLEQGQDVFGLHARFLPPRADQPSGNPDPAEAIGAMCARLGVDFHAVDLADAFEEAVVAPFIEEYVVGRTPNPCARCNATMKFGLLLDAARALGAARLATGHYVRQLRHPQWGMTLQRGADPAKDQSYFLSLVDRARLEQAVFPLGNWRKEQVKAELVKRNIVPPLPSESQEICFVPGDDYRAFLRDRQVRLPGPGPIVTMRGRKIGSHKGLWQYTEGQRRGLGIAWEEPLYVVSKDMENNVLLVGGREHLAARGCLTEDVNLLVDPADWPAEISVRTRYRQAPQPARVTVGDTGMAVRFREPQTPPARGQVAAVYDAEGHVLAGGVILGPV.

6–13 (ALSGGTDS) contributes to the ATP binding site. Residue cysteine 96 is the Nucleophile of the active site. The cysteines at positions 96 and 193 are disulfide-linked. Residue glycine 120 participates in ATP binding. Positions 143–145 (KDQ) are interaction with tRNA. Cysteine 193 acts as the Cysteine persulfide intermediate in catalysis. Residues 298–299 (RY) form an interaction with tRNA region.

It belongs to the MnmA/TRMU family.

The protein localises to the cytoplasm. The enzyme catalyses S-sulfanyl-L-cysteinyl-[protein] + uridine(34) in tRNA + AH2 + ATP = 2-thiouridine(34) in tRNA + L-cysteinyl-[protein] + A + AMP + diphosphate + H(+). Its function is as follows. Catalyzes the 2-thiolation of uridine at the wobble position (U34) of tRNA, leading to the formation of s(2)U34. This Nitratidesulfovibrio vulgaris (strain DSM 19637 / Miyazaki F) (Desulfovibrio vulgaris) protein is tRNA-specific 2-thiouridylase MnmA.